We begin with the raw amino-acid sequence, 273 residues long: Ethanolamine ammonia-lyase small subunit (273 aa).

Adenosylcob(III)alamin-binding residues include V164, E185, and C214.

The protein belongs to the EutC family. The basic unit is a heterodimer which dimerizes to form tetramers. The heterotetramers trimerize; 6 large subunits form a core ring with 6 small subunits projecting outwards. Requires adenosylcob(III)alamin as cofactor.

The protein resides in the bacterial microcompartment. The catalysed reaction is ethanolamine = acetaldehyde + NH4(+). It participates in amine and polyamine degradation; ethanolamine degradation. Its function is as follows. Catalyzes the deamination of various vicinal amino-alcohols to oxo compounds. Allows this organism to utilize ethanolamine as the sole source of nitrogen and carbon in the presence of external vitamin B12. The sequence is that of Ethanolamine ammonia-lyase small subunit from Pseudomonas aeruginosa (strain UCBPP-PA14).